Here is a 107-residue protein sequence, read N- to C-terminus: L-rhamnose mutarotase (107 aa).

Position 21 (Y21) interacts with substrate. The active-site Proton donor is the H25. Substrate-binding positions include Y44 and 79-80 (WW). Positions 88–107 (ETNPDNSPKTNSLKEVFHLD) are disordered. The span at 90–100 (NPDNSPKTNSL) shows a compositional bias: polar residues.

It belongs to the rhamnose mutarotase family. In terms of assembly, homodimer.

It localises to the cytoplasm. The enzyme catalyses alpha-L-rhamnose = beta-L-rhamnose. The protein operates within carbohydrate metabolism; L-rhamnose metabolism. Its function is as follows. Involved in the anomeric conversion of L-rhamnose. This chain is L-rhamnose mutarotase, found in Flavobacterium johnsoniae (strain ATCC 17061 / DSM 2064 / JCM 8514 / BCRC 14874 / CCUG 350202 / NBRC 14942 / NCIMB 11054 / UW101) (Cytophaga johnsonae).